The chain runs to 275 residues: tRNA uridine(34) hydroxylase (275 aa).

Residues 121–214 (SQPDVLVIDT…YLEKTYNKNG (94 aa)) form the Rhodanese domain. Residue cysteine 174 is the Cysteine persulfide intermediate of the active site.

This sequence belongs to the TrhO family.

The catalysed reaction is uridine(34) in tRNA + AH2 + O2 = 5-hydroxyuridine(34) in tRNA + A + H2O. Its function is as follows. Catalyzes oxygen-dependent 5-hydroxyuridine (ho5U) modification at position 34 in tRNAs. The sequence is that of tRNA uridine(34) hydroxylase from Wolbachia pipientis wMel.